A 93-amino-acid polypeptide reads, in one-letter code: YcgL domain-containing protein KPN78578_22820 (93 aa).

A YcgL domain is found at 1-85 (MFCVIYRSTK…PSENLLKKHL (85 aa)).

The sequence is that of YcgL domain-containing protein KPN78578_22820 from Klebsiella pneumoniae subsp. pneumoniae (strain ATCC 700721 / MGH 78578).